The sequence spans 204 residues: Lysozyme g (204 aa).

Positions 1–19 (MHLMLVLLGLAALLGTSQS) are cleaved as a signal peptide. Intrachain disulfides connect cysteine 23-cysteine 79 and cysteine 37-cysteine 48. Residues glutamate 92 and aspartate 105 contribute to the active site.

The protein belongs to the glycosyl hydrolase 23 family.

The protein resides in the secreted. It catalyses the reaction Hydrolysis of (1-&gt;4)-beta-linkages between N-acetylmuramic acid and N-acetyl-D-glucosamine residues in a peptidoglycan and between N-acetyl-D-glucosamine residues in chitodextrins.. Functionally, has bacteriolytic activity against M.luteus. The polypeptide is Lysozyme g (Struthio camelus (Common ostrich)).